The chain runs to 182 residues: MEILFVLFFVFVTVSGDCGVVTKDEWDGLTPIHVEYLARPVELVIIQHTVTSTCNTDAACAQIVRNIQSYHMDNLNYWDIGSSFIIGGNGKVYEGAGWLHVGAHTYGYNRKSIGITFIGNYNNDKPTQKSLDALRALLRCGVERGHLTANYHIVGHRQLISTESPGRKLYNEIRRWDHFLDN.

Residues 1-16 form the signal peptide; it reads MEILFVLFFVFVTVSG. 2 disulfides stabilise this stretch: cysteine 18-cysteine 140 and cysteine 54-cysteine 60. One can recognise an N-acetylmuramoyl-L-alanine amidase domain in the interval 39–166; that stretch reads RPVELVIIQH…RQLISTESPG (128 aa).

It belongs to the N-acetylmuramoyl-L-alanine amidase 2 family. As to quaternary structure, monomer. In terms of tissue distribution, strongly expressed in fat body with weak expression observed in hemocyte. No expression detected in gut.

Its function is as follows. Binds specifically to peptidoglycan and triggers the propenoloxidase cascade which is an important insect innate immune defense mechanism. This chain is Peptidoglycan recognition protein (PGRP), found in Trichoplusia ni (Cabbage looper).